Consider the following 82-residue polypeptide: Large ribosomal subunit protein bL28 (82 aa).

A disordered region spans residues 1 to 25 (MAKVDQITKKRAMTGNTRSHALNHS).

It belongs to the bacterial ribosomal protein bL28 family.

The polypeptide is Large ribosomal subunit protein bL28 (Malacoplasma penetrans (strain HF-2) (Mycoplasma penetrans)).